The primary structure comprises 234 residues: Potassium/proton antiporter CemA (234 aa).

Transmembrane regions (helical) follow at residues 8-28, 117-137, 157-177, and 193-213; these read IPLRYLSSIVFVVFLPWWIPL, TICFVILSGYSILCNEELFIL, ILFVTDLCIGFHSPRGWELLI, and IILSVLVSTFPVVLDTFFKYW.

Belongs to the CemA family.

It localises to the plastid. The protein localises to the chloroplast inner membrane. The catalysed reaction is K(+)(in) + H(+)(out) = K(+)(out) + H(+)(in). In terms of biological role, contributes to K(+)/H(+) antiport activity by supporting proton efflux to control proton extrusion and homeostasis in chloroplasts in a light-dependent manner to modulate photosynthesis. Prevents excessive induction of non-photochemical quenching (NPQ) under continuous-light conditions. Indirectly promotes efficient inorganic carbon uptake into chloroplasts. This is Potassium/proton antiporter CemA from Citrus sinensis (Sweet orange).